Here is a 211-residue protein sequence, read N- to C-terminus: ATP phosphoribosyltransferase (211 aa).

It belongs to the ATP phosphoribosyltransferase family. Short subfamily. Heteromultimer composed of HisG and HisZ subunits.

It localises to the cytoplasm. It catalyses the reaction 1-(5-phospho-beta-D-ribosyl)-ATP + diphosphate = 5-phospho-alpha-D-ribose 1-diphosphate + ATP. The protein operates within amino-acid biosynthesis; L-histidine biosynthesis; L-histidine from 5-phospho-alpha-D-ribose 1-diphosphate: step 1/9. Functionally, catalyzes the condensation of ATP and 5-phosphoribose 1-diphosphate to form N'-(5'-phosphoribosyl)-ATP (PR-ATP). Has a crucial role in the pathway because the rate of histidine biosynthesis seems to be controlled primarily by regulation of HisG enzymatic activity. This Ectopseudomonas mendocina (strain ymp) (Pseudomonas mendocina) protein is ATP phosphoribosyltransferase.